We begin with the raw amino-acid sequence, 294 residues long: MLERLSGQTRLTALLAAPARHSLSPKMHNAAYAKLGLDYAYLAFEVDNSGLAAAVQGMRALGICGANVSMPNKQAIVPLLDELSPAAALAGAVNTVVNTDGKGHLVGHITDGTGAIRSLAEEGVAIKDQIITIAGAGGAGTAIAVQLGLDGAKEIRLFNRKTATFKQAKQVLKGINAKTSALASLQDLADDRAFRRSIAESSIYIDATGVGMKPLEEHSLITDPALIRPDLVVFDLVYHPAETKLLAFAREHGAKKVMNGLGMLLYQGAEAFKLMTGEDMPVAYIRELLCRDKE.

Shikimate contacts are provided by residues 22-24 and Ser-69; that span reads SLS. Lys-73 acts as the Proton acceptor in catalysis. The shikimate site is built by Asn-94 and Asp-111. NADP(+)-binding positions include 135–139 and Leu-236; that span reads GAGGA. Tyr-238 contacts shikimate. Gly-260 contributes to the NADP(+) binding site.

It belongs to the shikimate dehydrogenase family. Homodimer.

The catalysed reaction is shikimate + NADP(+) = 3-dehydroshikimate + NADPH + H(+). It participates in metabolic intermediate biosynthesis; chorismate biosynthesis; chorismate from D-erythrose 4-phosphate and phosphoenolpyruvate: step 4/7. Functionally, involved in the biosynthesis of the chorismate, which leads to the biosynthesis of aromatic amino acids. Catalyzes the reversible NADPH linked reduction of 3-dehydroshikimate (DHSA) to yield shikimate (SA). In Streptococcus equi subsp. zooepidemicus (strain H70), this protein is Shikimate dehydrogenase (NADP(+)).